The following is a 455-amino-acid chain: NADH-quinone oxidoreductase subunit N (455 aa).

11 helical membrane passes run 25 to 45, 61 to 81, 99 to 119, 149 to 169, 193 to 213, 257 to 277, 285 to 305, 312 to 332, 355 to 375, 391 to 411, and 432 to 452; these read AIVP…ISEY, FSVA…ALSH, VFLL…MFFL, FLMG…IYGA, IGIV…PFHF, IQII…IMAL, MFAF…LLTS, LYYA…VMYV, AGIL…SGFF, IVVF…FKII, and IVAV…NVVL.

Belongs to the complex I subunit 2 family. In terms of assembly, NDH-1 is composed of 14 different subunits. Subunits NuoA, H, J, K, L, M, N constitute the membrane sector of the complex.

It localises to the cell inner membrane. The catalysed reaction is a quinone + NADH + 5 H(+)(in) = a quinol + NAD(+) + 4 H(+)(out). Functionally, NDH-1 shuttles electrons from NADH, via FMN and iron-sulfur (Fe-S) centers, to quinones in the respiratory chain. The immediate electron acceptor for the enzyme in this species is believed to be a menaquinone. Couples the redox reaction to proton translocation (for every two electrons transferred, four hydrogen ions are translocated across the cytoplasmic membrane), and thus conserves the redox energy in a proton gradient. The protein is NADH-quinone oxidoreductase subunit N of Flavobacterium psychrophilum (strain ATCC 49511 / DSM 21280 / CIP 103535 / JIP02/86).